A 387-amino-acid chain; its full sequence is Glutamyl-tRNA reductase 1 (387 aa).

Residues 45-48, Ser96, 101-103, and Gln107 contribute to the substrate site; these read TCNR and ETD. Cys46 serves as the catalytic Nucleophile. Position 175–180 (175–180) interacts with NADP(+); that stretch reads GAGSVG.

This sequence belongs to the glutamyl-tRNA reductase family. In terms of assembly, homodimer.

It carries out the reaction (S)-4-amino-5-oxopentanoate + tRNA(Glu) + NADP(+) = L-glutamyl-tRNA(Glu) + NADPH + H(+). It participates in porphyrin-containing compound metabolism; protoporphyrin-IX biosynthesis; 5-aminolevulinate from L-glutamyl-tRNA(Glu): step 1/2. In terms of biological role, catalyzes the NADPH-dependent reduction of glutamyl-tRNA(Glu) to glutamate 1-semialdehyde (GSA). This chain is Glutamyl-tRNA reductase 1, found in Pyrobaculum arsenaticum (strain DSM 13514 / JCM 11321 / PZ6).